A 26-amino-acid polypeptide reads, in one-letter code: Delta-hemolysin (26 aa).

The residue at position 1 (M1) is an N-formylmethionine.

This sequence belongs to the delta-lysin family.

It is found in the secreted. The protein resides in the host cell membrane. Functionally, lyses erythrocytes and many other mammalian cells. The sequence is that of Delta-hemolysin (hld) from Staphylococcus aureus (strain MSSA476).